Here is a 200-residue protein sequence, read N- to C-terminus: Pyridoxal 5'-phosphate synthase subunit PdxT (200 aa).

46–48 (GES) lines the L-glutamine pocket. Residue Cys78 is the Nucleophile of the active site. L-glutamine is bound by residues Arg107 and 138 to 139 (IR). Residues His175 and Glu177 each act as charge relay system in the active site.

It belongs to the glutaminase PdxT/SNO family. In the presence of PdxS, forms a dodecamer of heterodimers. Only shows activity in the heterodimer.

It carries out the reaction aldehydo-D-ribose 5-phosphate + D-glyceraldehyde 3-phosphate + L-glutamine = pyridoxal 5'-phosphate + L-glutamate + phosphate + 3 H2O + H(+). It catalyses the reaction L-glutamine + H2O = L-glutamate + NH4(+). It functions in the pathway cofactor biosynthesis; pyridoxal 5'-phosphate biosynthesis. In terms of biological role, catalyzes the hydrolysis of glutamine to glutamate and ammonia as part of the biosynthesis of pyridoxal 5'-phosphate. The resulting ammonia molecule is channeled to the active site of PdxS. This chain is Pyridoxal 5'-phosphate synthase subunit PdxT, found in Corynebacterium glutamicum (strain R).